The sequence spans 161 residues: NADH-quinone oxidoreductase subunit I (161 aa).

2 consecutive 4Fe-4S ferredoxin-type domains span residues 52 to 82 (LRRY…IESE) and 92 to 121 (SRYD…ETRV). Positions 62, 65, 68, 72, 101, 104, 107, and 111 each coordinate [4Fe-4S] cluster.

This sequence belongs to the complex I 23 kDa subunit family. As to quaternary structure, NDH-1 is composed of 14 different subunits. Subunits NuoA, H, J, K, L, M, N constitute the membrane sector of the complex. The cofactor is [4Fe-4S] cluster.

It is found in the cell inner membrane. The catalysed reaction is a quinone + NADH + 5 H(+)(in) = a quinol + NAD(+) + 4 H(+)(out). Its function is as follows. NDH-1 shuttles electrons from NADH, via FMN and iron-sulfur (Fe-S) centers, to quinones in the respiratory chain. The immediate electron acceptor for the enzyme in this species is believed to be ubiquinone. Couples the redox reaction to proton translocation (for every two electrons transferred, four hydrogen ions are translocated across the cytoplasmic membrane), and thus conserves the redox energy in a proton gradient. The chain is NADH-quinone oxidoreductase subunit I from Azoarcus sp. (strain BH72).